The following is a 319-amino-acid chain: MSMPLSFTSAVSPVAAIPTPRAAAETRTAASLRHAGKSGPVASPSQNTLNAQNLLNTLVGDISAAAPTAAAAPGVTRGQQSQEGDYALALLAKDVYSLNGQGAAGFNRLSDSALLGFGIDPASLHDAGSGFQAGIYSNDKQYVLAFAGTNDWRDWLSNVRQATGYDDVQYNQAVAAAKSAKAAFGDALVIAGHSLGGGLAATAALATGTVAVTFNAAGVSDYTLNRLGIDPAAAKKDAEAGGIRRYSEQYDMLTSTQESTSLIPDAIGHNITLANNDTLTGIDDWRPSKHLDRSLTAHGIDKVISSMAEQKPWEAKANA.

A signal peptide spans 1–24 (MSMPLSFTSAVSPVAAIPTPRAAA).

It carries out the reaction a 1,2-diacyl-sn-glycero-3-phosphocholine + H2O = a 2-acyl-sn-glycero-3-phosphocholine + a fatty acid + H(+). This chain is Extracellular phospholipase A1 (phlA), found in Serratia liquefaciens.